Consider the following 527-residue polypeptide: MNQLSLKLSMSIIKIIIMATKKIQLDNFIESQNKLYSFTKEKLFTDVTIVLDDGNCQTTLDLHKAVLASKCTYFYNLFTKFSESKQSVIKINVANSYVTANIIASFYSQNTDTRNYPHWKYYLLEIMCLDFLGLEYDLEYFSKIQVPVEGFELLLDVVDIIGYTSDTIPIIARNLPHDYDFTKFPMELIEQLIKYVYSFDIILVNSNGIIDFFNIHGDKIKSISTFFTNNDIKYYTSHKINDELIVVFADNIVNVWNIKNSVVEASLEYPVNVKTRFEHFCYLPSNNHLISTSSYNIYVWDLSTNKLIKTVKKHKNTITGIHVSPVNDSQFVTIGRDDRICIWNAKTYNIVRCMISPVDCICYSSSGRELVIVNKHYIKVFNVSDGTFLFKMKINLNKSPNNIINSSYGKYIINYDAYIKIFYYPPNHLNDCTDIYCPSNYTQGIYTPDKKYLIMNRSDEDYYDVYDNSVAKDNKYVCNSFRIGKHVSRVFMFKDSSIGLFIVKNSLTSLYENLTSLMQLQTQEYFP.

The BTB domain occupies 45–115 (TDVTIVLDDG…FYSQNTDTRN (71 aa)). 5 WD repeats span residues 215-266 (IHGD…VEAS), 272-310 (NVKT…LIKT), 313-353 (KHKN…IVRC), 355-391 (ISPV…FLFK), and 436-476 (YCPS…DNKY).

Belongs to the mimivirus BTB/WD family.

In Acanthamoeba polyphaga (Amoeba), this protein is Putative BTB/POZ domain and WD-repeat protein R783.